The chain runs to 20 residues: YVVPAAKLEAIYPKGLRVSI.

The protein belongs to the insect beta-1,3-glucan binding protein family. In terms of assembly, monomer.

It is found in the secreted. In terms of biological role, involved in the recognition of invading microorganisms causing their aggregation. Activates the phenoloxidase cascade. Binds specifically to beta-1,3-glucan. Binds the A.niger cell wall component alpha-1,3-glucan, a fungal pathogen-associated molecular pattern (PAMP) that activates the host immune response. The sequence is that of Beta-1,3-glucan-binding protein 2 from Galleria mellonella (Greater wax moth).